The primary structure comprises 289 residues: MSEPFEIVAGALGVAGLFNNCVACFEYVQLGRHFGRDYERCQLRLDIAKVRLSRWGEAVQINDDPRFHSSAPIDKSVQLAKSIVEEILLLFESAQKTSKRYELVADQQDLVVFEDKDMKPIGRALHRRLKDLVSRRQKQTSLAKKTAWALYDGKSLEKIVDQVAGFVDELEKAFPIEAVCHKLAENEIEEVEDEASLTILKDAAGGIDAAMSDAAAQKIDAIVGRNSAKDIRTEKRARVQLGNVVTAAALHGEIRISDQTTNSVETVVGKGESKVLIGNEYGGKGFWDN.

A globular domain region spans residues 1-227; it reads MSEPFEIVAG…KIDAIVGRNS (227 aa). Positions 218-289 are prion domain (PrD); that stretch reads KIDAIVGRNS…EYGGKGFWDN (72 aa).

Homodimer. Forms heterodimers with het-s.

The protein localises to the cytoplasm. Functionally, responsible for heterokaryon incompatibility, a process that ensures that during spontaneous, vegetative cell fusion only compatible cells from the same colony survive (non-self-recognition). Interaction with the prion form [het-s] of incompatible cells triggers a lethal reaction that prevents the formation of viable heterokaryons. In Podospora anserina (strain S / ATCC MYA-4624 / DSM 980 / FGSC 10383) (Pleurage anserina), this protein is Heterokaryon incompatibility protein S (het-S).